The primary structure comprises 63 residues: Metallothionein (63 aa).

Residues 1–30 (MDPQDCTCAAGDSCSCAGSCKCKNCRCRSC) form a beta region. A divalent metal cation-binding residues include Cys6, Cys8, Cys14, Cys16, Cys20, Cys22, Cys25, Cys27, Cys30, Cys34, Cys35, Cys37, Cys38, Cys42, Cys45, Cys49, Cys51, Cys59, Cys61, and Cys62. Residues 31–63 (RKSCCSCCPAGCNNCAKGCVCKEPASSKCSCCH) are alpha.

Belongs to the metallothionein superfamily. Type 1 family.

Its function is as follows. Metallothioneins have a high content of cysteine residues that bind various heavy metals. The sequence is that of Metallothionein from Anas platyrhynchos (Mallard).